A 984-amino-acid polypeptide reads, in one-letter code: Hyaluronate lyase (984 aa).

Composition is skewed to polar residues over residues M1 to K12, D19 to H32, and I54 to S66. Disordered stretches follow at residues M1–H32 and D49–K68. The N-terminal stretch at M1–A40 is a signal peptide. Active-site residues include N429, H479, and Y488. Residues T701–T726 show a composition bias toward basic and acidic residues. The disordered stretch occupies residues T701 to Q728.

It belongs to the polysaccharide lyase 8 family.

It localises to the secreted. It carries out the reaction [hyaluronan](n) = n 3-(4-deoxy-beta-D-gluc-4-enuronosyl)-N-acetyl-D-glucosamine + H2O. The polypeptide is Hyaluronate lyase (Streptococcus agalactiae serotype III (strain NEM316)).